The sequence spans 282 residues: Bis(5'-nucleosyl)-tetraphosphatase, symmetrical (282 aa).

The protein belongs to the Ap4A hydrolase family.

The enzyme catalyses P(1),P(4)-bis(5'-adenosyl) tetraphosphate + H2O = 2 ADP + 2 H(+). Its function is as follows. Hydrolyzes diadenosine 5',5'''-P1,P4-tetraphosphate to yield ADP. The chain is Bis(5'-nucleosyl)-tetraphosphatase, symmetrical from Salmonella agona (strain SL483).